We begin with the raw amino-acid sequence, 137 residues long: Small ribosomal subunit protein bS16 (137 aa).

The segment covering 104–118 has biased composition (basic and acidic residues); sequence ADEKKKPVLKPKTEK. The interval 104-137 is disordered; that stretch reads ADEKKKPVLKPKTEKAAPAPEAAAPEAESTEEQA. The segment covering 119 to 130 has biased composition (low complexity); sequence AAPAPEAAAPEA.

This sequence belongs to the bacterial ribosomal protein bS16 family.

The protein is Small ribosomal subunit protein bS16 of Clavibacter michiganensis subsp. michiganensis (strain NCPPB 382).